The following is a 723-amino-acid chain: Catalase-peroxidase (723 aa).

The tryptophyl-tyrosyl-methioninium (Trp-Tyr) (with M-252) cross-link spans 98 to 226; the sequence is WHAAGSYRAA…LAAVQMGLIY (129 aa). His99 acts as the Proton acceptor in catalysis. Positions 226 to 252 form a cross-link, tryptophyl-tyrosyl-methioninium (Tyr-Met) (with W-98); the sequence is YVNPEGVNGKPDPLKTAAQVRETFARM. Residue His267 participates in heme b binding. The interval 267–286 is disordered; sequence HTVGKTHGNGRAENLGPSPE.

This sequence belongs to the peroxidase family. Peroxidase/catalase subfamily. In terms of assembly, homodimer or homotetramer. Heme b is required as a cofactor. Formation of the three residue Trp-Tyr-Met cross-link is important for the catalase, but not the peroxidase activity of the enzyme.

The enzyme catalyses H2O2 + AH2 = A + 2 H2O. It carries out the reaction 2 H2O2 = O2 + 2 H2O. Bifunctional enzyme with both catalase and broad-spectrum peroxidase activity. This is Catalase-peroxidase from Thioalkalivibrio sulfidiphilus (strain HL-EbGR7).